Reading from the N-terminus, the 265-residue chain is Sarcotoxin II-1 (265 aa).

The N-terminal stretch at 1–22 is a signal peptide; sequence MKSFVLFAACMAIIALGSLAHA. Residues 23 to 24 constitute a propeptide, removed by a dipeptidylpeptidase; sequence YP. At glutamine 25 the chain carries Pyrrolidone carboxylic acid. Glycine 264 carries the glycine amide modification.

The protein belongs to the attacin/sarcotoxin-2 family. In terms of tissue distribution, synthesized by the fat body and is eventually secreted into the hemolymph.

It is found in the secreted. In terms of biological role, sarcotoxin II is an antibacterial protein which plays a role in the inflammatory response of this insect. The main effect of sarcotoxin II on E.coli may be the inhibition of cell wall synthesis, including septum formation. In Sarcophaga peregrina (Flesh fly), this protein is Sarcotoxin II-1.